A 116-amino-acid polypeptide reads, in one-letter code: Protein aq_1857 (116 aa).

Belongs to the HesB/IscA family.

This is Protein aq_1857 from Aquifex aeolicus (strain VF5).